A 1196-amino-acid chain; its full sequence is Protein BRASSINOSTEROID INSENSITIVE 1 (1196 aa).

A signal peptide spans 1–23; that stretch reads MKTFSSFFLSVTTLFFFSFFSLS. Residues 62–69 carry the Cys pair 1 motif; the sequence is CTFDGVTC. LRR repeat units lie at residues 71–98, 99–121, 122–146, 148–169, 172–197, 199–221, 222–244, 245–268, 269–290, 291–314, 316–338, 339–363, 364–388, 390–413, 415–439, 441–463, 464–487, 488–511, 513–535, 536–559, and 561–583; these read DDKVTSIDLSSKPLNVGFSAVSSSLLSL, TGLESLFLSNSHINGSVSGFKCS, ASLTSLDLSRNSLSGPVTTLTSLGS, SGLKFLNVSSNTLDFPGKVSGG, LNSLEVLDLSANSISGANVVGWVLSD, CGELKHLAISGNKISGDVDVSRC, VNLEFLDVSSNNFSTGIPFLGDC, SALQHLDISGNKLSGDFSRAISTC, TELKLLNISSNQFVGPIPPLPL, KSLQYLSLAENKFTGEIPDFLSGA, DTLTGLDLSGNHFYGAVPPFFGS, CSLLESLALSSNNFSGELPMDTLLK, MRGLKVLDLSFNEFSGELPESLTNL, ASLLTLDLSSNNFSGPILPNLCQN, KNTLQELYLQNNGFTGKIPPTLSNC, ELVSLHLSFNYLSGTIPSSLGSL, SKLRDLKLWLNMLEGEIPQELMYV, KTLETLILDFNDLTGEIPSGLSNC, NLNWISLSNNRLTGEIPKWIGRL, ENLAILKLSNNSFSGNIPAELGDC, and SLIWLDLNTNLFNGTIPAAMFKQ. Asn-112 is a glycosylation site (N-linked (GlcNAc...) asparagine). An N-linked (GlcNAc...) asparagine glycan is attached at Asn-154. Residue Asn-233 is glycosylated (N-linked (GlcNAc...) asparagine). The N-linked (GlcNAc...) asparagine glycan is linked to Asn-275. Residues Asn-351, Asn-387, Asn-401, and Asn-438 are each glycosylated (N-linked (GlcNAc...) asparagine). N-linked (GlcNAc...) asparagine glycosylation occurs at Asn-510. Asn-545 and Asn-573 each carry an N-linked (GlcNAc...) asparagine glycan. Tyr-597 lines the brassinolide pocket. Residue Asn-636 is glycosylated (N-linked (GlcNAc...) asparagine). Residues 640–642 are SERK1 binding; sequence RVY. Brassinolide is bound by residues Tyr-642 and Ser-647. Asn-653 carries N-linked (GlcNAc...) asparagine glycosylation. 4 LRR repeats span residues 653–677, 678–701, 702–725, and 727–750; these read NGSMMFLDMSYNMLSGYIPKEIGSM, PYLFILNLGHNDISGSIPDEVGDL, RGLNILDLSSNKLDGRIPQAMSAL, and MLTEIDLSNNNLSGPIPEMGQFET. Asn-705 is a binding site for brassinolide. The tract at residues 726–729 is SERK1 binding; that stretch reads TMLT. N-linked (GlcNAc...) asparagine glycosylation is present at Asn-737. The tract at residues 746-750 is SERK1 binding; sequence GQFET. The short motif at 763–770 is the Cys pair 2 element; that stretch reads CGYPLPRC. The chain crosses the membrane as a helical span at residues 793-813; sequence AGSVAMGLLFSFVCIFGLILV. Tyr-831 is modified (phosphotyrosine). Ser-838 is modified (phosphoserine). Phosphothreonine is present on residues Thr-842, Thr-846, and Thr-851. Ser-858 is modified (phosphoserine). Phosphothreonine is present on residues Thr-872 and Thr-880. In terms of domain architecture, Protein kinase spans 883 to 1158; that stretch reads FHNDSLIGSG…VQVMAMFKEI (276 aa). Residues Ser-887 and Ser-891 each carry the phosphoserine modification. Residues 889 to 897 and Lys-911 contribute to the ATP site; that span reads IGSGGFGDV. Phosphotyrosine is present on Tyr-956. Residues 957–959 and 963–966 contribute to the ATP site; these read EFM and SLED. Ser-981 is subject to Phosphoserine. Thr-982 carries the phosphothreonine modification. The active-site Proton acceptor is Asp-1009. Residues 1009-1014 and Asp-1027 contribute to the ATP site; that span reads DMKSSN. Ser-1035 carries the phosphoserine modification. Thr-1039 is modified (phosphothreonine). Residues Ser-1042 and Ser-1044 each carry the phosphoserine modification. Phosphothreonine is present on residues Thr-1045 and Thr-1049. At Tyr-1052 the chain carries Phosphotyrosine. Ser-1060 carries the phosphoserine modification. Tyr-1072 carries the phosphotyrosine modification. Phosphoserine occurs at positions 1166 and 1168. Position 1169 is a phosphothreonine (Thr-1169). 2 positions are modified to phosphoserine: Ser-1172 and Ser-1179. Position 1180 is a phosphothreonine (Thr-1180). Ser-1187 is modified (phosphoserine).

This sequence belongs to the protein kinase superfamily. Ser/Thr protein kinase family. Monomer or homodimer in the plasma membrane. Heterodimer with BAK1 in the endosomes. Interacts with SERK1 and TTL in a kinase-dependent manner. Bind to SERK1 in a brassinolide-dependent manner. Component of the SERK1 signaling complex, composed of KAPP, CDC48A, GRF6 or GRF7, SERK1, SERK2, SERK3/BAK1 and BRI1. Interacts with CDG1. No interactions with PSKR1 or CNGC17. Interacts with BIK1. Interacts with B'ALPHA, B'BETA, B'GAMMA and B'ETA. Interacts with BSK1 and BSK3. Interacts with BSK5, BSK6 and BSK11. Post-translationally, autophosphorylated on Tyr-831, Tyr-956 and maybe Tyr-1072. Phosphorylated on at least 12 sites, with a preference for Ser residues. Transphosphorylated on Ser-887 by SERK1 and on Ser-838, Thr-846, Ser-858 and Ser-1166 by BAK1. Phosphorylation on Ser-1166 enhances the kinase activity. Glycosylated. Expressed ubiquitously.

The protein resides in the cell membrane. Its subcellular location is the endosome membrane. It catalyses the reaction L-seryl-[protein] + ATP = O-phospho-L-seryl-[protein] + ADP + H(+). The enzyme catalyses L-threonyl-[protein] + ATP = O-phospho-L-threonyl-[protein] + ADP + H(+). It carries out the reaction L-tyrosyl-[protein] + ATP = O-phospho-L-tyrosyl-[protein] + ADP + H(+). Its activity is regulated as follows. Activated by Ser and Thr phosphorylation. Receptor with a dual specificity kinase activity acting on both serine/threonine- and tyrosine-containing substrates. Regulates, in response to brassinosteroid binding, a signaling cascade involved in plant development, including expression of light- and stress-regulated genes, promotion of cell elongation, normal leaf and chloroplast senescence, and flowering. Binds brassinolide (BL), and less effectively castasterone (CS), but not 2,3,22,23-O-tetramethylbrassinolide or ecdysone. May be involved in a feedback regulation of brassinosteroid biosynthesis. Phosphorylates BRI1-associated receptor kinase 1 (BAK1), Transthyretin-Like protein (TTL) and SERK1 on 'Ser-299' and 'Thr-462' in vitro. May have a guanylyl cyclase activity. Phosphorylates BSK1, BSK2 and BSK3 in vitro. Phosphorylates BSK1, BSK3, BSK5, BSK6, BSK8 and BSK11 in vitro. This Arabidopsis thaliana (Mouse-ear cress) protein is Protein BRASSINOSTEROID INSENSITIVE 1.